The sequence spans 198 residues: dITP/XTP pyrophosphatase (198 aa).

Substrate is bound at residue 7 to 12 (THNPHK). Mg(2+)-binding residues include glutamate 40 and aspartate 69. Aspartate 69 acts as the Proton acceptor in catalysis. Residues threonine 70, 151–154 (FGYD), lysine 174, and 179–180 (HR) contribute to the substrate site.

The protein belongs to the HAM1 NTPase family. Homodimer. It depends on Mg(2+) as a cofactor.

It catalyses the reaction XTP + H2O = XMP + diphosphate + H(+). The catalysed reaction is dITP + H2O = dIMP + diphosphate + H(+). The enzyme catalyses ITP + H2O = IMP + diphosphate + H(+). Functionally, pyrophosphatase that catalyzes the hydrolysis of nucleoside triphosphates to their monophosphate derivatives, with a high preference for the non-canonical purine nucleotides XTP (xanthosine triphosphate), dITP (deoxyinosine triphosphate) and ITP. Seems to function as a house-cleaning enzyme that removes non-canonical purine nucleotides from the nucleotide pool, thus preventing their incorporation into DNA/RNA and avoiding chromosomal lesions. The sequence is that of dITP/XTP pyrophosphatase from Thermoanaerobacter pseudethanolicus (strain ATCC 33223 / 39E) (Clostridium thermohydrosulfuricum).